A 356-amino-acid chain; its full sequence is MRFDLERPLQSAAAHRVAVLLINLGTPDAPTPRAVRRYLAQFLSDPRVVEIPSLVWQIILRLFILPFRGVASAKKYASVWMPEGSPLRVHTQKQVEGLRHLLHLNDYTVIVEYAMRYGTPDIPAMLNQLKLAGAERILLMPMYPQYSASTTATAFDAAFVALRRMRNQPEIRTVRQYADHPAYIAALAAQVNHYWHAHGRPDFAAGDKLVLSFHGVPKRTLDLGDPYHDQCQQTATLLMHALGLTSVECRVTFQSRFGKAEWLQPYTAPTLKELGAAGVHRADVFCPGFTADCLETIEEIGMEVRDEFLHAGGKVFHAIPCLNAAPAWIAALGEIVAQHLQGWPVQAATPQSASVA.

Positions 214 and 295 each coordinate Fe cation.

Belongs to the ferrochelatase family.

The protein resides in the cytoplasm. It carries out the reaction heme b + 2 H(+) = protoporphyrin IX + Fe(2+). Its pathway is porphyrin-containing compound metabolism; protoheme biosynthesis; protoheme from protoporphyrin-IX: step 1/1. Its function is as follows. Catalyzes the ferrous insertion into protoporphyrin IX. This chain is Ferrochelatase, found in Paraburkholderia phymatum (strain DSM 17167 / CIP 108236 / LMG 21445 / STM815) (Burkholderia phymatum).